The sequence spans 391 residues: GTPase Obg (391 aa).

Residues 1 to 159 (MKFIDEALIR…RDLLLELMLL (159 aa)) enclose the Obg domain. The 174-residue stretch at 160-333 (ADVGMLGLPN…LTRDIMDFIE (174 aa)) folds into the OBG-type G domain. GTP is bound by residues 166 to 173 (GLPNAGKS), 191 to 195 (FTTLV), 213 to 216 (DIPG), 283 to 286 (NKID), and 314 to 316 (SAA). Mg(2+) is bound by residues serine 173 and threonine 193.

This sequence belongs to the TRAFAC class OBG-HflX-like GTPase superfamily. OBG GTPase family. Monomer. The cofactor is Mg(2+).

The protein resides in the cytoplasm. An essential GTPase which binds GTP, GDP and possibly (p)ppGpp with moderate affinity, with high nucleotide exchange rates and a fairly low GTP hydrolysis rate. Plays a role in control of the cell cycle, stress response, ribosome biogenesis and in those bacteria that undergo differentiation, in morphogenesis control. The sequence is that of GTPase Obg from Actinobacillus pleuropneumoniae serotype 7 (strain AP76).